A 322-amino-acid polypeptide reads, in one-letter code: Interferon regulatory factor 1 (322 aa).

The segment at residues Arg-5 to Pro-113 is a DNA-binding region (IRF tryptophan pentad repeat). Position 78 is an N6-acetyllysine (Lys-78). The disordered stretch occupies residues Glu-92 to Tyr-164. Residues Gly-141 to Leu-157 are compositionally biased toward polar residues. Glycyl lysine isopeptide (Lys-Gly) (interchain with G-Cter in SUMO) cross-links involve residues Lys-276 and Lys-296.

It belongs to the IRF family. As to quaternary structure, monomer. Homodimer. Interacts with EP300. Interacts with MYD88. Interacts with PIAS3. Interacts with SPOP. Post-translationally, phosphorylated by CK2 and this positively regulates its activity. In terms of processing, sumoylation represses the transcriptional activity and displays enhanced resistance to protein degradation. Sumoylated by UBE2I/UBC9 and SUMO1. Inactivates the tumor suppressor activity. Elevated levels in tumor cells. Major site is Lys-276. Sumoylation is enhanced by PIAS3. Desumoylated by SENP1 in tumor cells and appears to compete with ubiquitination on C-terminal sites. Ubiquitinated in a SPOP-depedent manner. Appears to compete with sumoylation on C-terminal sites.

The protein resides in the nucleus. The protein localises to the cytoplasm. With respect to regulation, activated by MYD88. In terms of biological role, transcriptional regulator which displays a remarkable functional diversity in the regulation of cellular responses. Regulates transcription of IFN and IFN-inducible genes, host response to viral and bacterial infections, regulation of many genes expressed during hematopoiesis, inflammation, immune responses and cell proliferation and differentiation, regulation of the cell cycle and induction of growth arrest and programmed cell death following DNA damage. Stimulates both innate and acquired immune responses through the activation of specific target genes and can act as a transcriptional activator and repressor regulating target genes by binding to an interferon-stimulated response element (ISRE) in their promoters. Has an essentail role in IFNG-dependent immunity to mycobacteria. Binds to a consensus sequence in gene promoters. Its target genes for transcriptional activation activity include: genes involved in anti-viral response, such as IFN-alpha/beta, RIGI, TNFSF10/TRAIL, ZBP1, OAS1/2, PIAS1/GBP, EIF2AK2/PKR and RSAD2/viperin; antibacterial response, such as GBP2, GBP5 and NOS2/INOS; anti-proliferative response, such as p53/TP53, LOX and CDKN1A; apoptosis, such as BBC3/PUMA, CASP1, CASP7 and CASP8; immune response, such as IL7, IL12A/B and IL15, PTGS2/COX2 and CYBB; DNA damage responses and DNA repair, such as POLQ/POLH; MHC class I expression, such as TAP1, PSMB9/LMP2, PSME1/PA28A, PSME2/PA28B and B2M and MHC class II expression, such as CIITA; metabolic enzymes, such as ACOD1/IRG1. Represses genes involved in anti-proliferative response, such as BIRC5/survivin, CCNB1, CCNE1, CDK1, CDK2 and CDK4 and in immune response, such as FOXP3, IL4, ANXA2 and TLR4. Stimulates p53/TP53-dependent transcription through enhanced recruitment of EP300 leading to increased acetylation of p53/TP53. Plays an important role in immune response directly affecting NK maturation and activity, macrophage production of IL12, Th1 development and maturation of CD8+ T-cells. Also implicated in the differentiation and maturation of dendritic cells and in the suppression of regulatory T (Treg) cells development. Acts as a tumor suppressor and plays a role not only in antagonism of tumor cell growth but also in stimulating an immune response against tumor cells. In Sus scrofa (Pig), this protein is Interferon regulatory factor 1 (IRF1).